Here is a 124-residue protein sequence, read N- to C-terminus: Holo-[acyl-carrier-protein] synthase (124 aa).

Positions 8 and 60 each coordinate Mg(2+).

It belongs to the P-Pant transferase superfamily. AcpS family. Mg(2+) is required as a cofactor.

Its subcellular location is the cytoplasm. The enzyme catalyses apo-[ACP] + CoA = holo-[ACP] + adenosine 3',5'-bisphosphate + H(+). Transfers the 4'-phosphopantetheine moiety from coenzyme A to a Ser of acyl-carrier-protein. This Wolbachia pipientis subsp. Culex pipiens (strain wPip) protein is Holo-[acyl-carrier-protein] synthase.